A 476-amino-acid polypeptide reads, in one-letter code: Cytosolic iron-sulfur assembly component 3 (476 aa).

N-acetylalanine is present on Ala-2. Residues Cys-24, Cys-71, Cys-74, Cys-77, Cys-190, and Cys-246 each contribute to the [4Fe-4S] cluster site. Positions 297 to 316 (DGLTSSVSAEEPSSHRGGGS) are disordered. 2 residues coordinate [4Fe-4S] cluster: Cys-395 and Cys-399.

Belongs to the NARF family. External component of the CIA complex. In the CIA complex, interacts directly with CIAO1 and MMS19.

Functionally, component of the cytosolic iron-sulfur protein assembly (CIA) complex, a multiprotein complex that mediates the incorporation of iron-sulfur cluster into extramitochondrial Fe/S proteins. Seems to negatively regulate the level of HIF1A expression, although this effect could be indirect. The sequence is that of Cytosolic iron-sulfur assembly component 3 (Ciao3) from Mus musculus (Mouse).